We begin with the raw amino-acid sequence, 178 residues long: Cytidylate kinase 2 (178 aa).

Position 7–15 (7–15 (GKSGCGNTT)) interacts with ATP.

It belongs to the cytidylate kinase family. Type 2 subfamily.

It is found in the cytoplasm. It carries out the reaction CMP + ATP = CDP + ADP. The catalysed reaction is dCMP + ATP = dCDP + ADP. This chain is Cytidylate kinase 2, found in Borreliella afzelii (strain PKo) (Borrelia afzelii).